Reading from the N-terminus, the 378-residue chain is Quinolinate synthase (378 aa).

Iminosuccinate is bound by residues H59 and S80. C125 provides a ligand contact to [4Fe-4S] cluster. Residues 151–153 (YAN) and S168 contribute to the iminosuccinate site. Residue C212 coordinates [4Fe-4S] cluster. Iminosuccinate-binding positions include 238-240 (HPE) and T255. C309 provides a ligand contact to [4Fe-4S] cluster.

The protein belongs to the quinolinate synthase family. Type 1 subfamily. [4Fe-4S] cluster is required as a cofactor.

Its subcellular location is the cytoplasm. It carries out the reaction iminosuccinate + dihydroxyacetone phosphate = quinolinate + phosphate + 2 H2O + H(+). It functions in the pathway cofactor biosynthesis; NAD(+) biosynthesis; quinolinate from iminoaspartate: step 1/1. In terms of biological role, catalyzes the condensation of iminoaspartate with dihydroxyacetone phosphate to form quinolinate. This chain is Quinolinate synthase, found in Burkholderia thailandensis (strain ATCC 700388 / DSM 13276 / CCUG 48851 / CIP 106301 / E264).